A 166-amino-acid polypeptide reads, in one-letter code: NAD(P)H-quinone oxidoreductase subunit I, chloroplastic (166 aa).

4Fe-4S ferredoxin-type domains are found at residues 55–84 (GRIHFEFDKCIACEVCVRVCPIDLPVVDWK) and 95–124 (LNYSIDFGICIFCGNCVEYCPTNCLSMTEE). Residues cysteine 64, cysteine 67, cysteine 70, cysteine 74, cysteine 104, cysteine 107, cysteine 110, and cysteine 114 each contribute to the [4Fe-4S] cluster site.

It belongs to the complex I 23 kDa subunit family. NDH is composed of at least 16 different subunits, 5 of which are encoded in the nucleus. The cofactor is [4Fe-4S] cluster.

The protein localises to the plastid. Its subcellular location is the chloroplast thylakoid membrane. The catalysed reaction is a plastoquinone + NADH + (n+1) H(+)(in) = a plastoquinol + NAD(+) + n H(+)(out). It catalyses the reaction a plastoquinone + NADPH + (n+1) H(+)(in) = a plastoquinol + NADP(+) + n H(+)(out). NDH shuttles electrons from NAD(P)H:plastoquinone, via FMN and iron-sulfur (Fe-S) centers, to quinones in the photosynthetic chain and possibly in a chloroplast respiratory chain. The immediate electron acceptor for the enzyme in this species is believed to be plastoquinone. Couples the redox reaction to proton translocation, and thus conserves the redox energy in a proton gradient. The sequence is that of NAD(P)H-quinone oxidoreductase subunit I, chloroplastic from Hulsea algida (Pacific hulsea).